The sequence spans 648 residues: FAD-binding monooxygenase trt3 (648 aa).

Residues 118-121 (TWYW), 130-131 (DI), and Tyr-136 each bind FAD. An NADP(+)-binding site is contributed by 128–130 (MCD). Residues 274–280 (TGSTAVQ) and 297–298 (RT) each bind NADP(+).

Belongs to the FAD-binding monooxygenase family. Requires FAD as cofactor.

Its pathway is secondary metabolite biosynthesis; terpenoid biosynthesis. In terms of biological role, FAD-binding monooxygenase; part of the gene cluster that mediates the biosynthesis of terretonin, a fungal meroterpenoid that acts as a mycotoxin. The first step of the pathway is the synthesis of 3,5-dimethylorsellinic acid (DMOA) by the polyketide synthase trt4. DMOA is then prenylated into farnesyl-DMOA by the polyprenyl transferase trt2. Methylation by the methyltransferase trt5 then leads to farnesyl-DMOA methyl ester which is further subject to epoxidation by the FAD-dependent monooxygenase trt8 to yield epoxyfarnesyl-DMOA methyl ester. Cyclization of epoxyfarnesyl-DMOA methyl ester by the terpene cyclase trt1 leads to a tetracycle intermediate which is in turn converted to preterretonin. Dehydrogenase trt9 comes next to transform preterretonin to preterrenoid. The FAD-dependent monooxygenase trt3 is then required for the C-hydroxylation at C16 of preterrenoid to yield terrenoid. The cytochrome P450 trt6 catalyzes three successive oxidations to transform terrenoid into an unstable intermediate, which then undergoes the D-ring expansion and unusual rearrangement of the methoxy group to afford the core skeleton of terretonin. Trt14 catalyzes the D-ring expansion of terretonin involving intramolecular methoxy rearrangement as well as the hydrolysis of the expanded D-ring and the methyl ester moiety. Finally, the nonheme iron-dependent dioxygenase trt7 accomplishes the last two oxidation reactions steps to complete the biosynthesis of terretonin. Terretonin C is produced via spontaneous decarboxylation of the terretonin precursor. Another shunt product of the terretonin biosynthesis is dihydrofarnesyl-DMOA, derived from epoxyfarnesyl-DMOA through hydrolysis of the epoxide. In Aspergillus terreus (strain NIH 2624 / FGSC A1156), this protein is FAD-binding monooxygenase trt3.